The primary structure comprises 405 residues: D-threonate kinase (405 aa).

Residues Asp12, Arg59, and Lys88–Ser91 contribute to the substrate site. ATP is bound by residues Ser243, Gly337–Gly340, and Gly383.

This sequence belongs to the four-carbon acid sugar kinase family.

It carries out the reaction D-threonate + ATP = 4-O-phospho-D-threonate + ADP + H(+). Functionally, catalyzes the ATP-dependent phosphorylation of D-threonate to D-threonate 4-phosphate. Can also phosphorylate 4-hydroxy-L-threonine, with lower efficiency. The polypeptide is D-threonate kinase (Bordetella bronchiseptica (strain ATCC BAA-588 / NCTC 13252 / RB50) (Alcaligenes bronchisepticus)).